Reading from the N-terminus, the 628-residue chain is EF-hand calcium-binding domain-containing protein 7 (628 aa).

The span at 1-22 shows a compositional bias: polar residues; sequence MASNPGSDAALGTQNPLLSGSP. The tract at residues 1–24 is disordered; that stretch reads MASNPGSDAALGTQNPLLSGSPRT. EF-hand domains are found at residues 102 to 137 and 138 to 173; these read TSKA…RGEK and MTQE…TSEQ. A disordered region spans residues 192–231; it reads QFGSHMEGSPERGPSPAPKPSPRVIRKNDQETFSSKGDTS. 2 positions are modified to phosphoserine: serine 200 and serine 212. The segment covering 222 to 231 has biased composition (polar residues); that stretch reads ETFSSKGDTS. The 36-residue stretch at 402-437 folds into the EF-hand 3 domain; sequence EFRSTLSEIFEVIDLDGNGLISLEEYNFFELRTSGE. Ca(2+) is bound by residues aspartate 415, aspartate 417, asparagine 419, and glutamate 426.

As to quaternary structure, component of the EvC complex composed of EFCAB7, IQCE, EVC2 and EVC; built from two subcomplexes, EVC2:EVC and EFCAB7:IQCE. Interacts (via EF-hand 1 and 2) with IQCE (via N-terminus); this interaction anchors the EVC-EVC2 complex in a signaling microdomain at the base of cilia and stimulates the Hedgehog (Hh) pathway. Interacts with EVC2 (via N-terminal end). Interacts with EVC.

It localises to the cell projection. The protein localises to the cilium membrane. Its function is as follows. Component of the EvC complex that positively regulates ciliary Hedgehog (Hh) signaling. Required for the localization of the EVC2:EVC subcomplex at the base of primary cilia. This Mus musculus (Mouse) protein is EF-hand calcium-binding domain-containing protein 7 (Efcab7).